A 1592-amino-acid chain; its full sequence is Laminin subunit gamma-1 (1592 aa).

The first 19 residues, methionine 1–alanine 19, serve as a signal peptide directing secretion. The Laminin N-terminal domain maps to serine 29 to arginine 268. Asparagine 43 and asparagine 117 each carry an N-linked (GlcNAc...) asparagine glycan. Intrachain disulfides connect cysteine 269–cysteine 278, cysteine 271–cysteine 288, cysteine 290–cysteine 299, cysteine 302–cysteine 322, cysteine 325–cysteine 334, cysteine 327–cysteine 350, cysteine 353–cysteine 362, cysteine 365–cysteine 378, cysteine 381–cysteine 393, cysteine 383–cysteine 399, cysteine 401–cysteine 410, cysteine 413–cysteine 425, cysteine 428–cysteine 439, cysteine 430–cysteine 446, cysteine 448–cysteine 457, and cysteine 460–cysteine 475. 4 consecutive Laminin EGF-like domains span residues cysteine 269 to proline 324, cysteine 325 to alanine 380, cysteine 381 to proline 427, and cysteine 428 to proline 477. The Laminin IV type A domain maps to serine 504–isoleucine 672. 2 N-linked (GlcNAc...) asparagine glycosylation sites follow: asparagine 559 and asparagine 633. 24 disulfides stabilise this stretch: cysteine 707–cysteine 716, cysteine 709–cysteine 723, cysteine 725–cysteine 734, cysteine 737–cysteine 753, cysteine 756–cysteine 764, cysteine 758–cysteine 775, cysteine 778–cysteine 787, cysteine 790–cysteine 808, cysteine 811–cysteine 825, cysteine 813–cysteine 832, cysteine 835–cysteine 844, cysteine 847–cysteine 864, cysteine 867–cysteine 881, cysteine 869–cysteine 888, cysteine 890–cysteine 899, cysteine 902–cysteine 915, cysteine 918–cysteine 930, cysteine 920–cysteine 937, cysteine 939–cysteine 948, cysteine 951–cysteine 963, cysteine 966–cysteine 978, cysteine 968–cysteine 984, cysteine 986–cysteine 995, and cysteine 998–cysteine 1011. 6 consecutive Laminin EGF-like domains span residues cysteine 707–proline 755, cysteine 756–isoleucine 810, cysteine 811–alanine 866, cysteine 867–arginine 917, cysteine 918–proline 965, and cysteine 966–glutamate 1013. Asparagine 1005, asparagine 1041, asparagine 1048, asparagine 1090, asparagine 1144, asparagine 1158, asparagine 1188, asparagine 1206, asparagine 1253, asparagine 1363, and asparagine 1386 each carry an N-linked (GlcNAc...) asparagine glycan. Positions glutamate 1013 to proline 1592 are domain II and I. The stretch at tyrosine 1018 to asparagine 1477 forms a coiled coil. Over residues asparagine 1456–alanine 1472 the composition is skewed to basic and acidic residues. The segment at asparagine 1456 to serine 1489 is disordered. The segment covering serine 1476–serine 1489 has biased composition (polar residues). N-linked (GlcNAc...) asparagine glycans are attached at residues asparagine 1477 and asparagine 1487. Residues valine 1515–leucine 1579 adopt a coiled-coil conformation.

Laminin is a complex glycoprotein, consisting of three different polypeptide chains (alpha, beta, gamma), which are bound to each other by disulfide bonds into a cross-shaped molecule comprising one long and three short arms with globules at each end.

It is found in the secreted. Its subcellular location is the extracellular space. The protein localises to the extracellular matrix. The protein resides in the basement membrane. Its function is as follows. Binding to cells via a high affinity receptor, laminin is thought to mediate the attachment, migration and organization of cells into tissues during embryonic development by interacting with other extracellular matrix components. This is Laminin subunit gamma-1 (lamc1) from Xenopus tropicalis (Western clawed frog).